A 185-amino-acid polypeptide reads, in one-letter code: Avirulence protein ATR39-1 (185 aa).

A signal peptide spans 1–20 (MVKCTPLLALTVIVSAGSDA). A RxLR-dEER motif is present at residues 49–66 (RVLRASDVPDEVAAGESR).

Belongs to the RxLR effector family.

It localises to the secreted. The protein localises to the host cell. Secreted effector that acts as an elicitor of hypersensitive response (HR) specifically on plants carrying defense protein RPP39. The allele ATR39-1 is recognized by RPP39, whereas the ATR39-2 allele is not recognized. The chain is Avirulence protein ATR39-1 from Hyaloperonospora arabidopsidis (strain Emoy2) (Downy mildew agent).